The sequence spans 484 residues: 3-isopropylmalate dehydratase large subunit (484 aa).

Positions 352, 412, and 415 each coordinate [4Fe-4S] cluster. The segment at Thr463–Ala484 is disordered. Residues Leu464–Ala478 show a composition bias toward low complexity.

It belongs to the aconitase/IPM isomerase family. LeuC type 1 subfamily. As to quaternary structure, heterodimer of LeuC and LeuD. Requires [4Fe-4S] cluster as cofactor.

The enzyme catalyses (2R,3S)-3-isopropylmalate = (2S)-2-isopropylmalate. Its pathway is amino-acid biosynthesis; L-leucine biosynthesis; L-leucine from 3-methyl-2-oxobutanoate: step 2/4. Catalyzes the isomerization between 2-isopropylmalate and 3-isopropylmalate, via the formation of 2-isopropylmaleate. The polypeptide is 3-isopropylmalate dehydratase large subunit (Pseudarthrobacter chlorophenolicus (strain ATCC 700700 / DSM 12829 / CIP 107037 / JCM 12360 / KCTC 9906 / NCIMB 13794 / A6) (Arthrobacter chlorophenolicus)).